The chain runs to 341 residues: Ketol-acid reductoisomerase (NADP(+)) (341 aa).

One can recognise a KARI N-terminal Rossmann domain in the interval 2 to 181 (AKVYYNGDAN…GATRAGVLET (180 aa)). Residues 25 to 28 (YGSQ), Arg-48, Ser-52, and 82 to 85 (DEKQ) each bind NADP(+). His-107 is a catalytic residue. Gly-133 serves as a coordination point for NADP(+). Residues 182–327 (TFKEETETDL…RELRSMMPFV (146 aa)) enclose the KARI C-terminal knotted domain. Mg(2+) contacts are provided by Asp-190, Glu-194, Glu-226, and Glu-230. Position 251 (Ser-251) interacts with substrate.

Belongs to the ketol-acid reductoisomerase family. Requires Mg(2+) as cofactor.

The enzyme catalyses (2R)-2,3-dihydroxy-3-methylbutanoate + NADP(+) = (2S)-2-acetolactate + NADPH + H(+). It carries out the reaction (2R,3R)-2,3-dihydroxy-3-methylpentanoate + NADP(+) = (S)-2-ethyl-2-hydroxy-3-oxobutanoate + NADPH + H(+). The protein operates within amino-acid biosynthesis; L-isoleucine biosynthesis; L-isoleucine from 2-oxobutanoate: step 2/4. Its pathway is amino-acid biosynthesis; L-valine biosynthesis; L-valine from pyruvate: step 2/4. In terms of biological role, involved in the biosynthesis of branched-chain amino acids (BCAA). Catalyzes an alkyl-migration followed by a ketol-acid reduction of (S)-2-acetolactate (S2AL) to yield (R)-2,3-dihydroxy-isovalerate. In the isomerase reaction, S2AL is rearranged via a Mg-dependent methyl migration to produce 3-hydroxy-3-methyl-2-ketobutyrate (HMKB). In the reductase reaction, this 2-ketoacid undergoes a metal-dependent reduction by NADPH to yield (R)-2,3-dihydroxy-isovalerate. The chain is Ketol-acid reductoisomerase (NADP(+)) from Geobacillus sp. (strain WCH70).